A 198-amino-acid polypeptide reads, in one-letter code: CASP-like protein 1U1 (198 aa).

Residues 1–30 lie on the Cytoplasmic side of the membrane; that stretch reads MSDTPVVVIPRKGYVDGHHGYHHSYHSGLN. A helical transmembrane segment spans residues 31-51; that stretch reads LLLRLLQAFATAAAVIVMLLA. The Extracellular portion of the chain corresponds to 52-73; that stretch reads TQTEFTRYGEVRGRWRDYPAYK. Residues 74 to 94 traverse the membrane as a helical segment; the sequence is WFIIANAVVFVYALLATLVAC. At 95-117 the chain is on the cytoplasmic side; it reads CALIARRGPLSYSPSAWLTFLLD. A helical transmembrane segment spans residues 118 to 138; it reads FVAASALMSAASAALAVALIA. The Extracellular segment spans residues 139 to 165; sequence RNGQNLQGQHYWPTFCNYVTRFCDYAQ. Residues 166-186 form a helical membrane-spanning segment; it reads GAIIASFCGFGLLALSTLLAA. Over 187–198 the chain is Cytoplasmic; it reads SALHHLAWHRLH.

Belongs to the Casparian strip membrane proteins (CASP) family. As to quaternary structure, homodimer and heterodimers.

Its subcellular location is the cell membrane. In Physcomitrium patens (Spreading-leaved earth moss), this protein is CASP-like protein 1U1.